A 696-amino-acid chain; its full sequence is Interleukin-1 receptor accessory protein-like 1 (696 aa).

The first 24 residues, 1 to 24, serve as a signal peptide directing secretion; that stretch reads MKAPIPHLILLYATFTQSLKVVTK. The Ig-like C2-type 1 domain occupies 25–134; that stretch reads RGSADGCTDW…YCMKVSISLT (110 aa). Residues 25 to 357 lie on the Extracellular side of the membrane; sequence RGSADGCTDW…LLHKRELMYT (333 aa). 2 disulfide bridges follow: C31-C126 and C53-C118. N-linked (GlcNAc...) asparagine glycans are attached at residues N63, N122, and N138. Cystine bridges form between C143–C185 and C164–C216. Ig-like C2-type domains follow at residues 143-232 and 242-350; these read CYNS…TELT and PKLL…VLLH. N-linked (GlcNAc...) asparagine glycans are attached at residues N213, N264, and N331. Residues C267 and C334 are joined by a disulfide bond. A helical transmembrane segment spans residues 358–378; the sequence is VELAGGLGAILLLLVCSVTIY. Residues 379–696 are Cytoplasmic-facing; that stretch reads KCYKIEIMLF…RETSISSVIW (318 aa). The 157-residue stretch at 403 to 559 folds into the TIR domain; the sequence is KDYDAYLSYT…KFWKRLQYEM (157 aa). The active site involves E491. Residues 549 to 644 are interaction with NCS1; the sequence is SKFWKRLQYE…TGTLPLTSIG (96 aa). The disordered stretch occupies residues 659-680; it reads GQRPQTKSSREPNPDEAHTNSA. The span at 666–676 shows a compositional bias: basic and acidic residues; the sequence is SSREPNPDEAH.

This sequence belongs to the interleukin-1 receptor family. Homodimer. Interacts (calcium-independent) with NCS1/FREQ. Interacts (via the first immunoglobilin domain) with PTPRD (via the second immunoglobilin domain); this interaction is PTPRD-splicing-dependent and induces pre- and post-synaptic differentiation of neurons and is required for IL1RAPL1-mediated synapse formation.

The protein resides in the cell membrane. Its subcellular location is the cytoplasm. It is found in the cell projection. The protein localises to the axon. It localises to the dendrite. The enzyme catalyses NAD(+) + H2O = ADP-D-ribose + nicotinamide + H(+). In terms of biological role, may regulate secretion and presynaptic differentiation through inhibition of the activity of N-type voltage-gated calcium channel. May activate the MAP kinase JNK. Plays a role in neurite outgrowth. During dendritic spine formation can bidirectionally induce pre- and post-synaptic differentiation of neurons by trans-synaptically binding to PTPRD. This Rattus norvegicus (Rat) protein is Interleukin-1 receptor accessory protein-like 1 (Il1rapl1).